We begin with the raw amino-acid sequence, 444 residues long: Xylose isomerase (444 aa).

Residues H101 and D104 contribute to the active site. Mg(2+)-binding residues include E232, E268, H271, D296, D307, D309, and D339.

This sequence belongs to the xylose isomerase family. Homotetramer. Mg(2+) serves as cofactor.

The protein localises to the cytoplasm. The enzyme catalyses alpha-D-xylose = alpha-D-xylulofuranose. In Thermotoga maritima (strain ATCC 43589 / DSM 3109 / JCM 10099 / NBRC 100826 / MSB8), this protein is Xylose isomerase.